Consider the following 540-residue polypeptide: Phosphomethylpyrimidine synthase (540 aa).

Substrate-binding positions include Asn-143, Met-172, Tyr-201, His-237, 257-259, 298-301, and Glu-337; these read SRG and DGLR. His-341 contacts Zn(2+). Tyr-364 contributes to the substrate binding site. Position 405 (His-405) interacts with Zn(2+). [4Fe-4S] cluster contacts are provided by Cys-485, Cys-488, and Cys-493.

The protein belongs to the ThiC family. It depends on [4Fe-4S] cluster as a cofactor.

It catalyses the reaction 5-amino-1-(5-phospho-beta-D-ribosyl)imidazole + S-adenosyl-L-methionine = 4-amino-2-methyl-5-(phosphooxymethyl)pyrimidine + CO + 5'-deoxyadenosine + formate + L-methionine + 3 H(+). It participates in cofactor biosynthesis; thiamine diphosphate biosynthesis. Its function is as follows. Catalyzes the synthesis of the hydroxymethylpyrimidine phosphate (HMP-P) moiety of thiamine from aminoimidazole ribotide (AIR) in a radical S-adenosyl-L-methionine (SAM)-dependent reaction. In Mycobacterium avium (strain 104), this protein is Phosphomethylpyrimidine synthase.